The following is a 518-amino-acid chain: Maturase K (518 aa).

The protein belongs to the intron maturase 2 family. MatK subfamily.

Its subcellular location is the plastid. The protein resides in the chloroplast. Functionally, usually encoded in the trnK tRNA gene intron. Probably assists in splicing its own and other chloroplast group II introns. This chain is Maturase K, found in Syzygium cumini (Java plum).